Reading from the N-terminus, the 621-residue chain is SH2B adapter protein 2 (621 aa).

The residue at position 47 (tyrosine 47) is a Phosphotyrosine. Serine 130 carries the post-translational modification Phosphoserine. Positions arginine 144–arginine 165 are disordered. Residues aspartate 186 to aspartate 299 enclose the PH domain. Serine 303 bears the Phosphoserine mark. The region spanning tryptophan 409–valine 507 is the SH2 domain. Disordered regions lie at residues valine 507–alanine 528 and proline 548–glycine 609. Positions proline 552 to serine 570 are enriched in low complexity. Serine 597 is subject to Phosphoserine. The residue at position 618 (tyrosine 618) is a Phosphotyrosine.

This sequence belongs to the SH2B adapter family. As to quaternary structure, homodimer. Interacts with KIT/c-KIT, SHC1, EPOR, PDGFR, VAV1 and VAV3. Interacts (via N-terminal region) with SHC1. Interacts (via the phosphorylated C-terminus) with GRB2. Interacts (via its SH2 domain) with EPOR, INSR and KIT. Interacts with GRB2 after B-cell antigen receptor stimulation. Interacts (via PH domain) with VAV3. Interacts with NTRK1, NTRK2 and NTRK3 (phosphorylated); after stimulation of the receptor by its extracellular ligand and subsequent autophosphorylation of the receptor. Binds INSR, GRB2, ASB6 and CAP. Insulin stimulation leads to dissociation of CAP. Binds CBS only when SH2B2/APS has become phosphorylated. INSR binding does not depend on the phosphorylation of SH2B2/APS. Post-translationally, phosphorylated on a tyrosine residue by NTRK1, NTRK2, NTRK3 and INSR after stimulation of the receptor by its extracellular ligand. Tyrosine phosphorylated by JAK2, KIT and other kinases activated by B-cell receptor in response to stimulation with cytokines, IL3, IL5, PDGF, IGF1, IGF2, CSF2/GM-CSF and cross-linking of the B-cell receptor complex. Detected in embryonic brain, spinal cord and cortical neurons.

It localises to the cytoplasm. The protein resides in the membrane. Adapter protein for several members of the tyrosine kinase receptor family. Involved in multiple signaling pathways. Binds to EPOR and suppresses EPO-induced STAT5 activation, possibly through a masking effect on STAT5 docking sites in EPOR. Suppresses PDGF-induced mitogenesis. Involved in stimulation of glucose uptake by insulin. Involved in coupling from immunoreceptor to Ras signaling. Acts as a negative regulator of cytokine signaling in collaboration with CBL. Induces cytoskeletal reorganization and neurite outgrowth in cultured neurons. This Rattus norvegicus (Rat) protein is SH2B adapter protein 2 (Sh2b2).